A 336-amino-acid chain; its full sequence is Holliday junction branch migration complex subunit RuvB (336 aa).

Residues 4-184 are large ATPase domain (RuvB-L); the sequence is ADRLIQPQVI…FGIPLRLEFY (181 aa). Residues R24, G65, K68, T69, T70, 131–133, R174, Y184, and R221 contribute to the ATP site; that span reads EDY. T69 provides a ligand contact to Mg(2+). The small ATPAse domain (RuvB-S) stretch occupies residues 185–255; the sequence is NIKDLSTIVI…VAELALDMLD (71 aa). Residues 258 to 336 are head domain (RuvB-H); the sequence is AEGFDYMDRK…HFNLIQPEAK (79 aa). 3 residues coordinate DNA: R294, R313, and R318.

This sequence belongs to the RuvB family. As to quaternary structure, homohexamer. Forms an RuvA(8)-RuvB(12)-Holliday junction (HJ) complex. HJ DNA is sandwiched between 2 RuvA tetramers; dsDNA enters through RuvA and exits via RuvB. An RuvB hexamer assembles on each DNA strand where it exits the tetramer. Each RuvB hexamer is contacted by two RuvA subunits (via domain III) on 2 adjacent RuvB subunits; this complex drives branch migration. In the full resolvosome a probable DNA-RuvA(4)-RuvB(12)-RuvC(2) complex forms which resolves the HJ.

It localises to the cytoplasm. It catalyses the reaction ATP + H2O = ADP + phosphate + H(+). Its function is as follows. The RuvA-RuvB-RuvC complex processes Holliday junction (HJ) DNA during genetic recombination and DNA repair, while the RuvA-RuvB complex plays an important role in the rescue of blocked DNA replication forks via replication fork reversal (RFR). RuvA specifically binds to HJ cruciform DNA, conferring on it an open structure. The RuvB hexamer acts as an ATP-dependent pump, pulling dsDNA into and through the RuvAB complex. RuvB forms 2 homohexamers on either side of HJ DNA bound by 1 or 2 RuvA tetramers; 4 subunits per hexamer contact DNA at a time. Coordinated motions by a converter formed by DNA-disengaged RuvB subunits stimulates ATP hydrolysis and nucleotide exchange. Immobilization of the converter enables RuvB to convert the ATP-contained energy into a lever motion, pulling 2 nucleotides of DNA out of the RuvA tetramer per ATP hydrolyzed, thus driving DNA branch migration. The RuvB motors rotate together with the DNA substrate, which together with the progressing nucleotide cycle form the mechanistic basis for DNA recombination by continuous HJ branch migration. Branch migration allows RuvC to scan DNA until it finds its consensus sequence, where it cleaves and resolves cruciform DNA. This chain is Holliday junction branch migration complex subunit RuvB, found in Shewanella piezotolerans (strain WP3 / JCM 13877).